The following is a 93-amino-acid chain: Large ribosomal subunit protein uL23 (93 aa).

It belongs to the universal ribosomal protein uL23 family. Part of the 50S ribosomal subunit. Contacts protein L29, and trigger factor when it is bound to the ribosome.

One of the early assembly proteins it binds 23S rRNA. One of the proteins that surrounds the polypeptide exit tunnel on the outside of the ribosome. Forms the main docking site for trigger factor binding to the ribosome. The protein is Large ribosomal subunit protein uL23 of Campylobacter curvus (strain 525.92).